The primary structure comprises 487 residues: Glutamyl-tRNA(Gln) amidotransferase subunit A (487 aa).

Catalysis depends on charge relay system residues Lys74 and Ser149. Ser173 functions as the Acyl-ester intermediate in the catalytic mechanism.

The protein belongs to the amidase family. GatA subfamily. As to quaternary structure, heterotrimer of A, B and C subunits.

It catalyses the reaction L-glutamyl-tRNA(Gln) + L-glutamine + ATP + H2O = L-glutaminyl-tRNA(Gln) + L-glutamate + ADP + phosphate + H(+). Functionally, allows the formation of correctly charged Gln-tRNA(Gln) through the transamidation of misacylated Glu-tRNA(Gln) in organisms which lack glutaminyl-tRNA synthetase. The reaction takes place in the presence of glutamine and ATP through an activated gamma-phospho-Glu-tRNA(Gln). The polypeptide is Glutamyl-tRNA(Gln) amidotransferase subunit A (Synechococcus sp. (strain CC9311)).